A 610-amino-acid chain; its full sequence is UvrABC system protein C (610 aa).

The 79-residue stretch at 16-94 (SQPGVYRMYD…IKLYQPRYNV (79 aa)) folds into the GIY-YIG domain. Residues 204–239 (DQVLTQLIARMEKASQNLEFEEAARIRDQIQAVRRV) form the UVR domain.

The protein belongs to the UvrC family. Interacts with UvrB in an incision complex.

It is found in the cytoplasm. In terms of biological role, the UvrABC repair system catalyzes the recognition and processing of DNA lesions. UvrC both incises the 5' and 3' sides of the lesion. The N-terminal half is responsible for the 3' incision and the C-terminal half is responsible for the 5' incision. This is UvrABC system protein C from Escherichia fergusonii (strain ATCC 35469 / DSM 13698 / CCUG 18766 / IAM 14443 / JCM 21226 / LMG 7866 / NBRC 102419 / NCTC 12128 / CDC 0568-73).